The primary structure comprises 423 residues: Pre-mRNA-splicing regulator WTAP (423 aa).

Positions 234–423 (QQLSQMNQTQ…TSNASAGSVL (190 aa)) are disordered. 4 stretches are compositionally biased toward polar residues: residues 239–276 (MNQT…SSNV), 285–301 (NGPS…SGSS), 358–377 (DSPT…TDSN), and 392–404 (TAGT…NGLD). The span at 405–423 (SSAAAVATNTSNASAGSVL) shows a compositional bias: low complexity.

Belongs to the fl(2)d family. In terms of assembly, component of the WMM complex, a N6-methyltransferase complex composed of a catalytic subcomplex, named MAC, and of an associated subcomplex, named MACOM. Component of the MACOM subcomplex.

It is found in the nucleus speckle. Its subcellular location is the nucleus. The protein localises to the nucleoplasm. Functionally, associated component of the WMM complex, a complex that mediates N6-methyladenosine (m6A) methylation of RNAs, a modification that plays a role in the efficiency of mRNA splicing and RNA processing. In Danio rerio (Zebrafish), this protein is Pre-mRNA-splicing regulator WTAP.